The following is a 189-amino-acid chain: Ribosome hibernation promotion factor (189 aa).

Belongs to the HPF/YfiA ribosome-associated protein family. Long HPF subfamily. In terms of assembly, interacts with 100S ribosomes.

It is found in the cytoplasm. Functionally, required for dimerization of active 70S ribosomes into 100S ribosomes in stationary phase; 100S ribosomes are translationally inactive and sometimes present during exponential growth. The chain is Ribosome hibernation promotion factor from Staphylococcus epidermidis (strain ATCC 35984 / DSM 28319 / BCRC 17069 / CCUG 31568 / BM 3577 / RP62A).